The following is a 324-amino-acid chain: Polyketide biosynthesis acyltransferase homolog BaeD (324 aa).

Residue Ser99 is part of the active site.

The protein localises to the cytoplasm. It functions in the pathway antibiotic biosynthesis; bacillaene biosynthesis. Functionally, probably involved in some intermediate steps for the synthesis of the antibiotic polyketide bacillaene which is involved in secondary metabolism. This chain is Polyketide biosynthesis acyltransferase homolog BaeD (baeD), found in Bacillus velezensis (strain DSM 23117 / BGSC 10A6 / LMG 26770 / FZB42) (Bacillus amyloliquefaciens subsp. plantarum).